The following is a 245-amino-acid chain: MQPPRPACQDEGTHGKEVCMLLIQKKRLLVVLIVSFLSILFSAGYAFRIGMLHAHKGSAETILFYGFVAAAFHFILSLYLMLHAHHKKKELLKLADMLRYGGSIGESHFKKFGVLGTQIQFLLKELLALSAQKSLKIAALSGLQRALTELIPTPVIIIDLNGTILDMTKGARKRVQRADKTLTIEHIFPATDSTRAVQEAEKTHTPVEQEGGIVFIPVFSAVGNISHFLVDISKQPASDEPLSLA.

The next 2 membrane-spanning stretches (helical) occupy residues L29–M51 and T61–H83.

It localises to the cell membrane. This is an uncharacterized protein from Treponema pallidum (strain Nichols).